A 137-amino-acid polypeptide reads, in one-letter code: MPTINQLVRKPRKSKVEKSDSPALNKGYNSFKKTQTNVNSPQKRGVCTRVGTMTPKKPNSALRKYARVRLSNLIEVTAYIPGIGHNLQEHSVVLLRGGRVKDLPGVRYHIVRGALDTAGVNDRKQSRSKYGTKRPKA.

The segment at methionine 1–proline 55 is disordered. Positions glycine 27 to glutamine 42 are enriched in polar residues. The residue at position 102 (aspartate 102) is a 3-methylthioaspartic acid.

Belongs to the universal ribosomal protein uS12 family. As to quaternary structure, part of the 30S ribosomal subunit. Contacts proteins S8 and S17. May interact with IF1 in the 30S initiation complex.

Its function is as follows. With S4 and S5 plays an important role in translational accuracy. In terms of biological role, interacts with and stabilizes bases of the 16S rRNA that are involved in tRNA selection in the A site and with the mRNA backbone. Located at the interface of the 30S and 50S subunits, it traverses the body of the 30S subunit contacting proteins on the other side and probably holding the rRNA structure together. The combined cluster of proteins S8, S12 and S17 appears to hold together the shoulder and platform of the 30S subunit. The sequence is that of Small ribosomal subunit protein uS12 from Enterococcus faecalis (strain ATCC 700802 / V583).